Reading from the N-terminus, the 246-residue chain is MNNNTTAPTYTLRGLQLIGWRDMQHALDYLFADGQLKQGTLVAINAEKMLTIEDNAEVRELINAAEFKYADGISVVRSVRKKYPQAQVSRVAGADLWEELMARAGKEGTPVFLVGGKPEVLAQTETKLRNQWNVNIVGSQDGYFKPEQRQALFERIHASGAQIVTVAMGSPKQEIFMRDCRLVHPDALYMGVGGTYDVFTGHVKRAPKIWQTLGLEWLYRLLSQPSRIKRQLRLLRYLRWHYTGNL.

Belongs to the glycosyltransferase 26 family.

It carries out the reaction UDP-N-acetyl-alpha-D-mannosaminouronate + N-acetyl-alpha-D-glucosaminyl-di-trans,octa-cis-undecaprenyl diphosphate = beta-D-ManNAcA-(1-&gt;4)-alpha-D-GlcNAc-di-trans,octa-cis-undecaprenyl diphosphate + UDP + H(+). Its pathway is bacterial outer membrane biogenesis; enterobacterial common antigen biosynthesis. Its function is as follows. Catalyzes the synthesis of Und-PP-GlcNAc-ManNAcA (Lipid II), the second lipid-linked intermediate involved in enterobacterial common antigen (ECA) synthesis. The protein is UDP-N-acetyl-D-mannosaminuronic acid transferase of Escherichia coli O7:K1 (strain IAI39 / ExPEC).